The primary structure comprises 414 residues: Collagenase (414 aa).

Belongs to the peptidase U32 family. As to quaternary structure, homodimer. A metal cation is required as a cofactor.

In terms of biological role, has collagenase activity. Hydrolyzes type I collagen. May play a role in virulence. The protein is Collagenase (prtC) of Porphyromonas gingivalis (strain ATCC BAA-308 / W83).